We begin with the raw amino-acid sequence, 397 residues long: Succinate--CoA ligase [ADP-forming] subunit beta (397 aa).

In terms of domain architecture, ATP-grasp spans 9 to 254 (KALLRSYGAP…ETEEDPKELA (246 aa)). ATP contacts are provided by residues K46, 53 to 55 (GRG), E109, S112, and E117. Mg(2+) contacts are provided by N209 and D223. Residues N274 and 331–333 (GIM) each bind substrate.

Belongs to the succinate/malate CoA ligase beta subunit family. In terms of assembly, heterotetramer of two alpha and two beta subunits. Requires Mg(2+) as cofactor.

It catalyses the reaction succinate + ATP + CoA = succinyl-CoA + ADP + phosphate. It carries out the reaction GTP + succinate + CoA = succinyl-CoA + GDP + phosphate. It participates in carbohydrate metabolism; tricarboxylic acid cycle; succinate from succinyl-CoA (ligase route): step 1/1. Functionally, succinyl-CoA synthetase functions in the citric acid cycle (TCA), coupling the hydrolysis of succinyl-CoA to the synthesis of either ATP or GTP and thus represents the only step of substrate-level phosphorylation in the TCA. The beta subunit provides nucleotide specificity of the enzyme and binds the substrate succinate, while the binding sites for coenzyme A and phosphate are found in the alpha subunit. This chain is Succinate--CoA ligase [ADP-forming] subunit beta, found in Cereibacter sphaeroides (strain ATCC 17025 / ATH 2.4.3) (Rhodobacter sphaeroides).